We begin with the raw amino-acid sequence, 314 residues long: Methionyl-tRNA formyltransferase (314 aa).

A (6S)-5,6,7,8-tetrahydrofolate-binding site is contributed by Ser-112 to Pro-115.

It belongs to the Fmt family.

It catalyses the reaction L-methionyl-tRNA(fMet) + (6R)-10-formyltetrahydrofolate = N-formyl-L-methionyl-tRNA(fMet) + (6S)-5,6,7,8-tetrahydrofolate + H(+). Its function is as follows. Attaches a formyl group to the free amino group of methionyl-tRNA(fMet). The formyl group appears to play a dual role in the initiator identity of N-formylmethionyl-tRNA by promoting its recognition by IF2 and preventing the misappropriation of this tRNA by the elongation apparatus. This Legionella pneumophila subsp. pneumophila (strain Philadelphia 1 / ATCC 33152 / DSM 7513) protein is Methionyl-tRNA formyltransferase.